A 215-amino-acid polypeptide reads, in one-letter code: MFGFLKQVGDYTRDAVDAARNLAQGFSVTFDHMKRRPVTVQYPYEKLIPSERYRGRIHYEFDKCIACEVCVRVCPINLPVVDWVMNKATKKKELRNYSIDFGVCIFCGNCVEYCPTNCLSMTEEYELAAFDRHSLNYDNVALGRLPTSVTTDPSVQPLRELAYLPAGEMDPHGVPNDRPRAGQLPSQVLETLAPPAKVGAKNEGQSTGTTQEGEA.

4Fe-4S ferredoxin-type domains follow at residues glycine 55–valine 84 and arginine 95–glutamate 124. 8 residues coordinate [4Fe-4S] cluster: cysteine 64, cysteine 67, cysteine 70, cysteine 74, cysteine 104, cysteine 107, cysteine 110, and cysteine 114. The tract at residues alanine 166–alanine 215 is disordered. Positions methionine 169–arginine 180 are enriched in basic and acidic residues. Positions glutamate 203 to alanine 215 are enriched in polar residues.

Belongs to the complex I 23 kDa subunit family. As to quaternary structure, NDH-1 is composed of at least 11 different subunits. The cofactor is [4Fe-4S] cluster.

The protein resides in the cellular thylakoid membrane. It catalyses the reaction a plastoquinone + NADH + (n+1) H(+)(in) = a plastoquinol + NAD(+) + n H(+)(out). It carries out the reaction a plastoquinone + NADPH + (n+1) H(+)(in) = a plastoquinol + NADP(+) + n H(+)(out). Functionally, NDH-1 shuttles electrons from an unknown electron donor, via FMN and iron-sulfur (Fe-S) centers, to quinones in the respiratory and/or the photosynthetic chain. The immediate electron acceptor for the enzyme in this species is believed to be plastoquinone. Couples the redox reaction to proton translocation, and thus conserves the redox energy in a proton gradient. This is NAD(P)H-quinone oxidoreductase subunit I from Parasynechococcus marenigrum (strain WH8102).